Here is a 70-residue protein sequence, read N- to C-terminus: MNCKIEFMSFLVMTSIVILFLFVSGKVEAEPQCIGSCEMLADCNTACIRMGYLFGQCVGWKTPDMCCCNH.

An N-terminal signal peptide occupies residues 1 to 29 (MNCKIEFMSFLVMTSIVILFLFVSGKVEA). Cystine bridges form between C33-C68, C37-C57, C43-C66, and C47-C67.

Belongs to the DEFL family.

It is found in the secreted. The protein is Putative defensin-like protein 73 (LCR44) of Arabidopsis thaliana (Mouse-ear cress).